The chain runs to 449 residues: C4-dicarboxylate transport protein (449 aa).

9 helical membrane-spanning segments follow: residues 5–25 (AVFK…VSLG), 45–65 (LIKM…IAGM), 77–97 (LAVL…LIVV), 149–169 (GDML…HSFG), 185–205 (VLFG…FGAM), 231–251 (CVIF…FSII), 298–318 (GYSF…VFIA), 332–352 (TLLV…GSGF), and 353–373 (IVLA…LALI).

This sequence belongs to the dicarboxylate/amino acid:cation symporter (DAACS) (TC 2.A.23) family.

It localises to the cell inner membrane. Responsible for the transport of dicarboxylates such as succinate, fumarate, and malate from the periplasm across the membrane. This Dechloromonas aromatica (strain RCB) protein is C4-dicarboxylate transport protein.